A 409-amino-acid chain; its full sequence is MFINPRNVSNTFLQEPLRHSSNLTEMPVEAENVKSKTEYYNAWSEWERNAPPGNGEQREMAVSRLRDCLDRQAHELELNNLGLSSLPELPPHLESLVASCNSLTELPELPQSLKSLLVDNNNLKALSDLPPLLEYLGVSNNQLEKLPELQNSSFLKIIDVDNNSLKKLPDLPPSLEFIAAGNNQLEELPELQNLPFLTAIYADNNSLKKLPDLPLSLESIVAGNNILEELPELQNLPFLTTIYADNNLLKTLPDLPPSLEALNVRDNYLTDLPELPQSLTFLDVSENIFSGLSELPPNLYYLNASSNEIRSLCDLPPSLEELNVSNNKLIELPALPPRLERLIASFNHLAEVPELPQNLKQLHVEYNPLREFPDIPESVEDLRMNSERVVDPYEFAHETTDKLEDDVFE.

LRR repeat units follow at residues 72-91 (QAHELELNNLGLSSLPELPP), 92-113 (HLESLVASCNSLTELPELPQSL), 114-131 (KSLLVDNNNLKALSDLPP), 132-153 (LLEYLGVSNNQLEKLPELQNSS), 154-173 (FLKIIDVDNNSLKKLPDLPP), 174-195 (SLEFIAAGNNQLEELPELQNLP), 196-215 (FLTAIYADNNSLKKLPDLPL), 216-237 (SLESIVAGNNILEELPELQNLP), 238-257 (FLTTIYADNNLLKTLPDLPP), 258-279 (SLEALNVRDNYLTDLPELPQSL), 280-297 (TFLDVSENIFSGLSELPP), 298-317 (NLYYLNASSNEIRSLCDLPP), 318-339 (SLEELNVSNNKLIELPALPPRL), 340-357 (ERLIASFNHLAEVPELPQ), and 358-379 (NLKQLHVEYNPLREFPDIPESV). 2 residues coordinate Ca(2+): Asn246 and Asp266. Ca(2+) is bound by residues Asn307, Glu308, and Asn326.

Belongs to the LRR-containing bacterial E3 ligase family. As to quaternary structure, homotetramer forming a hollow cylinder with an inner diameter of approximately 35 angstroms.

The protein localises to the cell outer membrane. It is found in the secreted. Effector proteins function to alter host cell physiology and promote bacterial survival in host tissues. The polypeptide is Outer membrane protein YopM (yopM) (Yersinia pestis).